Here is a 317-residue protein sequence, read N- to C-terminus: Ornithine carbamoyltransferase (317 aa).

Residues 57-60 (STRT), Gln84, Arg108, and 135-138 (HPCQ) each bind carbamoyl phosphate. Residues Asn166, Asp230, and 234 to 235 (SM) each bind L-ornithine. Carbamoyl phosphate is bound by residues 270 to 271 (CL) and Arg298.

It belongs to the aspartate/ornithine carbamoyltransferase superfamily. OTCase family. As to quaternary structure, homododecamer.

It is found in the cytoplasm. The enzyme catalyses carbamoyl phosphate + L-ornithine = L-citrulline + phosphate + H(+). It functions in the pathway amino-acid biosynthesis; L-arginine biosynthesis; L-arginine from L-ornithine and carbamoyl phosphate: step 1/3. Functionally, reversibly catalyzes the transfer of the carbamoyl group from carbamoyl phosphate (CP) to the N(epsilon) atom of ornithine (ORN) to produce L-citrulline. The sequence is that of Ornithine carbamoyltransferase from Pyrococcus abyssi (strain GE5 / Orsay).